The primary structure comprises 80 residues: Cytochrome c oxidase subunit 7B, mitochondrial (80 aa).

A mitochondrion-targeting transit peptide spans 1–24 (MFPLVKNALNRLQVRSIQQTMARQ). Residues 25-32 (SHQKRTPD) lie on the Mitochondrial matrix side of the membrane. A helical membrane pass occupies residues 33-59 (FHDKYGNAVLASGATFCIVTWTYVATQ). The Mitochondrial intermembrane portion of the chain corresponds to 60–80 (VGIEWNLSPVGRVTPKEWRNQ).

It belongs to the cytochrome c oxidase VIIb family. As to quaternary structure, component of the cytochrome c oxidase (complex IV, CIV), a multisubunit enzyme composed of 14 subunits. The complex is composed of a catalytic core of 3 subunits MT-CO1, MT-CO2 and MT-CO3, encoded in the mitochondrial DNA, and 11 supernumerary subunits COX4I, COX5A, COX5B, COX6A, COX6B, COX6C, COX7A, COX7B, COX7C, COX8 and NDUFA4, which are encoded in the nuclear genome. The complex exists as a monomer or a dimer and forms supercomplexes (SCs) in the inner mitochondrial membrane with NADH-ubiquinone oxidoreductase (complex I, CI) and ubiquinol-cytochrome c oxidoreductase (cytochrome b-c1 complex, complex III, CIII), resulting in different assemblies (supercomplex SCI(1)III(2)IV(1) and megacomplex MCI(2)III(2)IV(2)).

It is found in the mitochondrion inner membrane. The protein operates within energy metabolism; oxidative phosphorylation. Functionally, component of the cytochrome c oxidase, the last enzyme in the mitochondrial electron transport chain which drives oxidative phosphorylation. The respiratory chain contains 3 multisubunit complexes succinate dehydrogenase (complex II, CII), ubiquinol-cytochrome c oxidoreductase (cytochrome b-c1 complex, complex III, CIII) and cytochrome c oxidase (complex IV, CIV), that cooperate to transfer electrons derived from NADH and succinate to molecular oxygen, creating an electrochemical gradient over the inner membrane that drives transmembrane transport and the ATP synthase. Cytochrome c oxidase is the component of the respiratory chain that catalyzes the reduction of oxygen to water. Electrons originating from reduced cytochrome c in the intermembrane space (IMS) are transferred via the dinuclear copper A center (CU(A)) of subunit 2 and heme A of subunit 1 to the active site in subunit 1, a binuclear center (BNC) formed by heme A3 and copper B (CU(B)). The BNC reduces molecular oxygen to 2 water molecules using 4 electrons from cytochrome c in the IMS and 4 protons from the mitochondrial matrix. Plays a role in proper central nervous system (CNS) development in vertebrates. The sequence is that of Cytochrome c oxidase subunit 7B, mitochondrial (COX7B) from Pongo abelii (Sumatran orangutan).